The sequence spans 176 residues: Disulfide bond formation protein B (176 aa).

Topologically, residues 1-11 (MLQLTTYRNLQ) are cytoplasmic. The chain crosses the membrane as a helical span at residues 12–28 (VFLVIMTAIGMSFALFF). The Periplasmic portion of the chain corresponds to 29–46 (LQRYMGFSPCPLCIFQRI). The cysteines at positions 38 and 41 are disulfide-linked. Residues 47–63 (GLMIMGGFALIAALFHP) traverse the membrane as a helical segment. The Cytoplasmic portion of the chain corresponds to 64–70 (KSMVIRL). Residues 71 to 88 (LLWLGSLAGIGWAAIVAG) form a helical membrane-spanning segment. Over 89–145 (RHVWLQHLPADQVPSCGPGLDYWLDTLPMQQVLKEVFAGSGECASIEWTFLGLSIPE) the chain is Periplasmic. A disulfide bridge links Cys104 with Cys131. A helical membrane pass occupies residues 146-164 (QSLILFSILILTHLLILWR). Over 165–176 (IVRPSTPKPLAR) the chain is Cytoplasmic.

The protein belongs to the DsbB family.

It localises to the cell inner membrane. In terms of biological role, required for disulfide bond formation in some periplasmic proteins. Acts by oxidizing the DsbA protein. This is Disulfide bond formation protein B from Psychrobacter arcticus (strain DSM 17307 / VKM B-2377 / 273-4).